Reading from the N-terminus, the 522-residue chain is MEXLQGYLEKGRSRQQPLLYPLLFQEYIYALAHDRGLKGSLFYEPTEVFGYDSXSRLALVKRLIIXIYQQNFFLFGVNDSNKNRFVSHHHNNFCYSHFYSQVISQGFAILVEIPFSLRLXSYFEKKEIPXSHNLRSIHSIFPFLEDKLLHLNYVSDILIPHPIHMEILVQILQCWIQDVPLLHFLRFFLHKYHNWNSFLITPKKSIYVFSKENKRLFRFLYNSYVSECEFLLVFLRKQSSYLRLTSFGFFLERRHFYVKIERLRMQHLILIVVCRDFFQGTLWSFKDPFMXXXXXXXXXVLASXGTHLLXKKWXYNXXNLWQYYFHFWYQSYRIHMNQLSXYSFYFLGYLSSLLKNSSTVRNQMLENSFLIDTVTNKFETLVPVIFLIGSLSKAQFCTVSGHPISKPIWADLSDSEIIERFGRMCRNLSHYHSGSSKKQGLYRIKYILRLSCARTSAXTHXSTVRTFXRRLGSGLLEEFFTEEEQVLSLILPKTIPFTFYGSHKERIWYLDIIRINDLVNHS.

It belongs to the intron maturase 2 family. MatK subfamily.

The protein resides in the plastid. Its subcellular location is the chloroplast. Its function is as follows. Usually encoded in the trnK tRNA gene intron. Probably assists in splicing its own and other chloroplast group II introns. This Iris sanguinea (Japanese iris) protein is Maturase K.